Here is a 62-residue protein sequence, read N- to C-terminus: LECHNQQSIQTPTTTGCSGGETNCYKKRWRDHRGYRTERGCGCPSVKNGIEINCCTTDRCNN.

Polar residues predominate over residues 1–16 (LECHNQQSIQTPTTTG). A disordered region spans residues 1 to 20 (LECHNQQSIQTPTTTGCSGG). 4 disulfide bridges follow: C3/C24, C17/C41, C43/C54, and C55/C60.

It belongs to the three-finger toxin family. Short-chain subfamily. Type I alpha-neurotoxin sub-subfamily. In terms of tissue distribution, expressed by the venom gland.

The protein localises to the secreted. In terms of biological role, binds to muscle nicotinic acetylcholine receptor (nAChR) and inhibit acetylcholine from binding to the receptor, thereby impairing neuromuscular transmission. This Naja kaouthia (Monocled cobra) protein is Short neurotoxin 1.